A 335-amino-acid chain; its full sequence is Deoxyhypusine hydroxylase (335 aa).

HEAT-like PBS-type repeat units follow at residues 71–97, 104–130, 200–233, 238–264, and 271–298; these read LKHE…VAKD, CRHE…LRDN, LRYR…GLKD, FRHE…ALSN, and VRHE…FLND. Residues histidine 73, glutamate 74, histidine 106, and glutamate 107 each coordinate Fe cation. Fe cation contacts are provided by histidine 240, glutamate 241, histidine 273, and glutamate 274.

The protein belongs to the deoxyhypusine hydroxylase family. Requires Fe(2+) as cofactor.

It is found in the cytoplasm. Its subcellular location is the nucleus. It carries out the reaction [eIF5A protein]-deoxyhypusine + AH2 + O2 = [eIF5A protein]-hypusine + A + H2O. The protein operates within protein modification; eIF5A hypusination. In terms of biological role, catalyzes the hydroxylation of the N(6)-(4-aminobutyl)-L-lysine intermediate to form hypusine, an essential post-translational modification only found in mature eIF-5A factor. In Neosartorya fischeri (strain ATCC 1020 / DSM 3700 / CBS 544.65 / FGSC A1164 / JCM 1740 / NRRL 181 / WB 181) (Aspergillus fischerianus), this protein is Deoxyhypusine hydroxylase (lia1).